The sequence spans 576 residues: Sulfite reductase [NADPH] hemoprotein beta-component (576 aa).

The [4Fe-4S] cluster site is built by Cys-435, Cys-441, Cys-480, and Cys-484. Cys-484 contributes to the siroheme binding site.

It belongs to the nitrite and sulfite reductase 4Fe-4S domain family. Alpha(8)-beta(8). The alpha component is a flavoprotein, the beta component is a hemoprotein. Requires siroheme as cofactor. [4Fe-4S] cluster is required as a cofactor.

It catalyses the reaction hydrogen sulfide + 3 NADP(+) + 3 H2O = sulfite + 3 NADPH + 4 H(+). The protein operates within sulfur metabolism; hydrogen sulfide biosynthesis; hydrogen sulfide from sulfite (NADPH route): step 1/1. Component of the sulfite reductase complex that catalyzes the 6-electron reduction of sulfite to sulfide. This is one of several activities required for the biosynthesis of L-cysteine from sulfate. The polypeptide is Sulfite reductase [NADPH] hemoprotein beta-component (Yersinia pseudotuberculosis serotype O:1b (strain IP 31758)).